The sequence spans 665 residues: GRB2-associated-binding protein 2 (665 aa).

The residue at position 2 (Ser-2) is a Phosphoserine. In terms of domain architecture, PH spans 8-119; that stretch reads DVVCTGWLRK…WVQSICQICG (112 aa). The disordered stretch occupies residues 131-184; it reads RNLSSASHGPRSSPAEFSSSQHLLRERKSSAPSHSSQPTLFTFEPPVSSHMQPT. Residues Ser-135, Ser-142, Ser-143, Ser-149, Ser-150, Ser-160, Ser-165, Ser-211, Ser-220, and Ser-261 each carry the phosphoserine modification. Residues 160-170 are compositionally biased toward polar residues; that stretch reads SAPSHSSQPTL. The residue at position 262 (Thr-262) is a Phosphothreonine. Phosphotyrosine is present on Tyr-263. Thr-275 bears the Phosphothreonine mark. Phosphoserine is present on residues Ser-278 and Ser-282. Position 284 is a phosphothreonine (Thr-284). Phosphotyrosine is present on Tyr-290. Thr-328 is modified (phosphothreonine). Residues 338–396 form a disordered region; sequence VATPGDSAIAPPPRPPKPSQAETSQWGSIQQRPPISENSRSVAATIPRRNTLPAMDNSR. The short motif at 348 to 355 is the SH3-binding element; the sequence is PPPRPPKP. The span at 357–379 shows a compositional bias: polar residues; the sequence is QAETSQWGSIQQRPPISENSRSV. Ser-365 carries the post-translational modification Phosphoserine. Phosphothreonine is present on residues Thr-382 and Thr-388. Ser-402 is subject to Phosphoserine. Thr-405 carries the post-translational modification Phosphothreonine. The segment at 408–445 is disordered; the sequence is YPARGSGESASWSAEPPGKTAVGRSNSASSDDNYVPMN. Residue Ser-420 is modified to Phosphoserine. The segment covering 430 to 439 has biased composition (polar residues); the sequence is GRSNSASSDD. Tyr-441 is subject to Phosphotyrosine. Residue Ser-469 is modified to Phosphoserine. The disordered stretch occupies residues 491–517; sequence PSRGSEIQPPPVNRNLKPDRKAKPTPL. Positions 499 to 508 match the SH3-binding motif; it reads PPPVNRNLKP. Position 532 is a phosphoserine (Ser-532). Composition is skewed to polar residues over residues 548–566 and 578–600; these read SSSQ…STDS and NPVS…STGS. 2 disordered regions span residues 548-632 and 646-665; these read SSSQ…KVDY and TMQE…GAKL. Ser-612 is modified (phosphoserine). Phosphotyrosine is present on Tyr-632. The span at 646 to 659 shows a compositional bias: polar residues; that stretch reads TMQEWTDVRQSSEP.

This sequence belongs to the GAB family. Part of a complex composed of EEIG1, TNFRSF11A/RANK, PLCG2, GAB2, TEC and BTK; complex formation increases in the presence of TNFSF11/RANKL. Interacts with HCK. Interacts with SHC1; may mediate interaction with receptors. Interacts with SYK. Interacts with PI-3 kinase. Interacts with GRB2 (via SH3 2 domain). Interacts (phosphorylated) with PTPN11. Interacts with TNFRSF11A (via cytoplasmic domain). Interacts (phosphorylated) with 14-3-3 family proteins SFN, YWHAB, YWHAE, YWHAG, YWHAH, YWHAQ and YWHAZ; prevents interaction with GRB2 and attenuates GAB2 signaling. Post-translationally, phosphorylated upon EGF stimulation. Phosphorylated on tyrosine residues by HCK upon IL6 signaling. Phosphorylated on tyrosine residue(s) by the thrombopoietin receptor (TPOR), stem cell factor receptor (SCFR), and T-cell and B-cell antigen receptors, gp130, IL-2R and IL-3R. Phosphorylated upon stimulation of TNFRSF11A/RANK by TNFSF11/RANKL. Dephosphorylated by PTPN11. In terms of tissue distribution, ubiquitously expressed.

The protein resides in the cytoplasm. It localises to the cell membrane. The protein localises to the membrane raft. In terms of biological role, adapter protein which acts downstream of several membrane receptors including cytokine, antigen, hormone, cell matrix and growth factor receptors to regulate multiple signaling pathways. Regulates osteoclast differentiation mediating the TNFRSF11A/RANK signaling. In allergic response, it plays a role in mast cells activation and degranulation through PI-3-kinase regulation. Also involved in the regulation of cell proliferation and hematopoiesis. The protein is GRB2-associated-binding protein 2 (Gab2) of Mus musculus (Mouse).